A 327-amino-acid chain; its full sequence is Protein EMSY-LIKE 1 (327 aa).

The 88-residue stretch at 1 to 88 folds into the ENT domain; that stretch reads METQIHQLEQ…HATIQPFDVL (88 aa). A coiled-coil region spans residues 32-58; it reads ESLITELRKELRVSDDEHRELLSRVNK. Disordered stretches follow at residues 206-257 and 305-327; these read GHGS…SDDI and ADTSDGEMDGDPPYSHDHPMPQG. The span at 214-232 shows a compositional bias: basic residues; that stretch reads GNRRGQIHGGRGRGPRIHQ. The stretch at 281–306 forms a coiled coil; sequence LELDKAKKMLKEHEQALIAAIARLAD. Ser-308 carries the post-translational modification Phosphoserine. The segment covering 318-327 has biased composition (basic and acidic residues); that stretch reads YSHDHPMPQG.

Isoform 1 interacts with EDM2 in nucleus.

The protein localises to the nucleus. Functionally, probably involved in the regulation of chromatin states. Contributes to RPP7-mediated and basal immunity, especially against Hyaloperonospora arabidopsidis isolate Hiks1. Regulates negatively EDM2-dependent floral transition. The protein is Protein EMSY-LIKE 1 of Arabidopsis thaliana (Mouse-ear cress).